A 382-amino-acid polypeptide reads, in one-letter code: Alkanesulfonate monooxygenase (382 aa).

The protein belongs to the SsuD family. Homotetramer.

The catalysed reaction is an alkanesulfonate + FMNH2 + O2 = an aldehyde + FMN + sulfite + H2O + 2 H(+). Catalyzes the desulfonation of aliphatic sulfonates. The sequence is that of Alkanesulfonate monooxygenase from Serratia proteamaculans (strain 568).